A 116-amino-acid polypeptide reads, in one-letter code: Ribonuclease P protein component (116 aa).

The protein belongs to the RnpA family. Consists of a catalytic RNA component (M1 or rnpB) and a protein subunit.

It carries out the reaction Endonucleolytic cleavage of RNA, removing 5'-extranucleotides from tRNA precursor.. Functionally, RNaseP catalyzes the removal of the 5'-leader sequence from pre-tRNA to produce the mature 5'-terminus. It can also cleave other RNA substrates such as 4.5S RNA. The protein component plays an auxiliary but essential role in vivo by binding to the 5'-leader sequence and broadening the substrate specificity of the ribozyme. This Geobacillus sp. (strain WCH70) protein is Ribonuclease P protein component.